The chain runs to 538 residues: Putative cysteine ligase BshC (538 aa).

Residues 460 to 484 adopt a coiled-coil conformation; sequence KINEQIELLERMLKRNVEKKHEVEL.

Belongs to the BshC family.

Involved in bacillithiol (BSH) biosynthesis. May catalyze the last step of the pathway, the addition of cysteine to glucosamine malate (GlcN-Mal) to generate BSH. This Bacillus anthracis (strain A0248) protein is Putative cysteine ligase BshC.